The chain runs to 183 residues: uncharacterized protein (183 aa).

Belongs to the asfivirus S183L family.

This is an uncharacterized protein from African swine fever virus (isolate Warthog/Namibia/Wart80/1980) (ASFV).